The primary structure comprises 934 residues: MSAHDLKLEEIVNAETLRRKLNELADTADESYTSLPMRKVVLQTLKDALASGRANAEDMLMKDGGGTLCAKRLCYLMDTLIDILFEFATTRAYPTRNPSKAENMALVAVGGYGRGGLAQGSDIDLLFLLPYKQTPWGEQVVEHTLYMLWDMGLKVGHSTRNIDECIRLAREDMTIRTALLDARFLTGDKDLFRTLEIRFEEEIVKGTEPEFIQAKLAERDARHRKAGETRYLVEPNVKEGKGGQRDLHTLFWITKYFYRVKTKEELVKLGVLSRAELKLFNKAEDFLWAVRCHMHFATLKAEERLSFDIQPEIAQRLGYTAHPGQNYVERFMKHYFLVAKDVGDLTRIICAALEEQQAKHVPGFNRIFLTFSRRKRKLSDDGAFISENHRINIARPDIFRQDPVNMIRLFHLADRHGLEFHPEAMQSLTRSLKLINADLRENPEANRLFLEILTSPRNPELILRRMNESGVLGKFIPDFGKIVAMMQFNMYHHYTVDEHLLRCIAVLSEIEHGELKTEHPLSNHLITTIKRDRNLLYVTLLLHDIAKGRPEDHSIAGARIARRLCPRFGLTPSETETVEWLVREHLTMSMVAQSRDLNDRKTIIDFADTVQTMERLKLLLILTVCDIKAVGPGIWNGWKGQLLRTLFYETELVLTGGFSELSRAARDKQAREALAERLSDWPKEERDAYLALPYTNYFLTVSLDDQVRHAHFIRDADQQGRALVTMAKPHAFEAVTEITVLAPDHPRLLSVITGACAAAGGNIVDAQIFTTSDGRALDTILISREFDTDDDERRRAERVGKVIEDVLSGKAHLPDMLAKRTKPKKAARAFKVEPRVEINNTLSNKFTVIEVEGLDRPGLLSELTGLISDLSLDIASAHITTFGEKVIDSFYVTDLVGHKISNATRQGNIKRKLLALLGAENGARTNGRSPQAAA.

Residues 1-379 are uridylyltransferase; sequence MSAHDLKLEE…TFSRRKRKLS (379 aa). The interval 380 to 736 is uridylyl-removing; the sequence is DDGAFISENH…AKPHAFEAVT (357 aa). In terms of domain architecture, HD spans 496 to 613; it reads VDEHLLRCIA…IDFADTVQTM (118 aa). ACT domains follow at residues 737 to 818 and 848 to 931; these read EITV…DMLA and VIEV…RSPQ.

It belongs to the GlnD family. Mg(2+) is required as a cofactor.

It catalyses the reaction [protein-PII]-L-tyrosine + UTP = [protein-PII]-uridylyl-L-tyrosine + diphosphate. The catalysed reaction is [protein-PII]-uridylyl-L-tyrosine + H2O = [protein-PII]-L-tyrosine + UMP + H(+). With respect to regulation, uridylyltransferase (UTase) activity is inhibited by glutamine, while glutamine activates uridylyl-removing (UR) activity. In terms of biological role, modifies, by uridylylation and deuridylylation, the PII regulatory proteins (GlnB and homologs), in response to the nitrogen status of the cell that GlnD senses through the glutamine level. Under low glutamine levels, catalyzes the conversion of the PII proteins and UTP to PII-UMP and PPi, while under higher glutamine levels, GlnD hydrolyzes PII-UMP to PII and UMP (deuridylylation). Thus, controls uridylylation state and activity of the PII proteins, and plays an important role in the regulation of nitrogen assimilation and metabolism. The polypeptide is Bifunctional uridylyltransferase/uridylyl-removing enzyme (Brucella melitensis biotype 2 (strain ATCC 23457)).